Consider the following 433-residue polypeptide: T-box transcription factor T (433 aa).

A DNA-binding region (T-box) is located at residues 49-217 (LWLRFKELTN…YNPFAKAFLD (169 aa)).

Monomer. Binds DNA as a monomer.

It is found in the nucleus. Functionally, involved in the transcriptional regulation of genes required for mesoderm formation and differentiation. Binds to a palindromic site (called T site) and activates gene transcription when bound to such a site. The chain is T-box transcription factor T from Gallus gallus (Chicken).